The sequence spans 98 residues: UPF0213 protein LACR_2011 (98 aa).

In terms of domain architecture, GIY-YIG spans 2-79 (NTHFTYVLQC…KLVRQQKLKL (78 aa)).

It belongs to the UPF0213 family.

In Lactococcus lactis subsp. cremoris (strain SK11), this protein is UPF0213 protein LACR_2011.